The chain runs to 256 residues: ATP synthase subunit a (256 aa).

6 helical membrane-spanning segments follow: residues 33–53 (ITTF…LTLL), 92–112 (YFPL…IGMI), 122–142 (MVFI…IGLY), 148–168 (FFAL…LVLI), 191–211 (GHLL…VSIV), and 235–255 (MIQS…GLYL).

This sequence belongs to the ATPase A chain family. In terms of assembly, F-type ATPases have 2 components, CF(1) - the catalytic core - and CF(0) - the membrane proton channel. CF(1) has five subunits: alpha(3), beta(3), gamma(1), delta(1), epsilon(1). CF(0) has three main subunits: a, b and c.

The protein resides in the mitochondrion inner membrane. Its function is as follows. Mitochondrial membrane ATP synthase (F(1)F(0) ATP synthase or Complex V) produces ATP from ADP in the presence of a proton gradient across the membrane which is generated by electron transport complexes of the respiratory chain. F-type ATPases consist of two structural domains, F(1) - containing the extramembraneous catalytic core and F(0) - containing the membrane proton channel, linked together by a central stalk and a peripheral stalk. During catalysis, ATP synthesis in the catalytic domain of F(1) is coupled via a rotary mechanism of the central stalk subunits to proton translocation. Key component of the proton channel; it may play a direct role in the translocation of protons across the membrane. The chain is ATP synthase subunit a (ATP6) from Wickerhamomyces canadensis (Yeast).